Here is a 171-residue protein sequence, read N- to C-terminus: Transcriptional repressor NrdR (171 aa).

The segment covering 1–10 (MQCPHCHHNG) has biased composition (basic residues). The segment at 1 to 21 (MQCPHCHHNGSRVVDSRPTDD) is disordered. A zinc finger spans residues 3–34 (CPHCHHNGSRVVDSRPTDDGRVIRRRRECENC). In terms of domain architecture, ATP-cone spans 49-139 (LLVIKKNGAR…VYRQFKDMHV (91 aa)). The segment at 152-171 (KVKLAKPSAKTTHAPKRKKD) is disordered.

Belongs to the NrdR family. Zn(2+) is required as a cofactor.

In terms of biological role, negatively regulates transcription of bacterial ribonucleotide reductase nrd genes and operons by binding to NrdR-boxes. The polypeptide is Transcriptional repressor NrdR (Lactiplantibacillus plantarum (strain ATCC BAA-793 / NCIMB 8826 / WCFS1) (Lactobacillus plantarum)).